The primary structure comprises 132 residues: Small ribosomal subunit protein uS8c (132 aa).

This sequence belongs to the universal ribosomal protein uS8 family. In terms of assembly, part of the 30S ribosomal subunit.

Its subcellular location is the plastid. It is found in the chloroplast. Functionally, one of the primary rRNA binding proteins, it binds directly to 16S rRNA central domain where it helps coordinate assembly of the platform of the 30S subunit. The sequence is that of Small ribosomal subunit protein uS8c (rps8) from Huperzia lucidula (Shining clubmoss).